We begin with the raw amino-acid sequence, 137 residues long: Basic phospholipase A2 DsM-S1 (137 aa).

An N-terminal signal peptide occupies residues 1 to 16 (MRTLWIVAVCLIGVEG). 7 disulfide bridges follow: Cys-42/Cys-131, Cys-44/Cys-60, Cys-59/Cys-111, Cys-65/Cys-137, Cys-66/Cys-104, Cys-73/Cys-97, and Cys-91/Cys-102. The Ca(2+) site is built by Tyr-43, Gly-45, and Gly-47. The active site involves His-63. Residue Asp-64 participates in Ca(2+) binding. The active site involves Asp-105.

This sequence belongs to the phospholipase A2 family. Group II subfamily. D49 sub-subfamily. Requires Ca(2+) as cofactor. Expressed by the venom gland.

The protein resides in the secreted. The enzyme catalyses a 1,2-diacyl-sn-glycero-3-phosphocholine + H2O = a 1-acyl-sn-glycero-3-phosphocholine + a fatty acid + H(+). Snake venom phospholipase A2 (PLA2) that is neurotoxic. PLA2 catalyzes the calcium-dependent hydrolysis of the 2-acyl groups in 3-sn-phosphoglycerides. In Daboia siamensis (Eastern Russel's viper), this protein is Basic phospholipase A2 DsM-S1.